The following is a 434-amino-acid chain: Protein arginine N-methyltransferase 2 (434 aa).

Positions Ile155 to Glu198 are disordered. Basic and acidic residues predominate over residues Asp178–Pro193. The RMT2 domain occupies Pro193–Val434. S-adenosyl-L-methionine-binding positions include Tyr200, Met230, Phe258–Ile263, Glu279–His281, Trp306–Gln307, and Asp327.

It belongs to the class I-like SAM-binding methyltransferase superfamily. RMT2 methyltransferase family. Monomer.

It localises to the cytoplasm. The protein localises to the nucleus. In terms of biological role, S-adenosyl-L-methionine-dependent protein-arginine N-methyltransferase that methylates the delta-nitrogen atom of arginine residues to form N5-methylarginine (type IV) in target proteins. Monomethylates ribosomal protein L12. This Debaryomyces hansenii (strain ATCC 36239 / CBS 767 / BCRC 21394 / JCM 1990 / NBRC 0083 / IGC 2968) (Yeast) protein is Protein arginine N-methyltransferase 2.